The following is a 371-amino-acid chain: uncharacterized protein (371 aa).

To E.coli YcjY.

This is an uncharacterized protein from Pseudomonas aeruginosa (strain ATCC 15692 / DSM 22644 / CIP 104116 / JCM 14847 / LMG 12228 / 1C / PRS 101 / PAO1).